We begin with the raw amino-acid sequence, 332 residues long: MQIGPYTIAPKVILAPMAGVTDKPFRLLCKRLGAGLAVSEMTISDPRFWGTRKSLHRMDHAGEPDPISVQIAGTEPQQLAEAARYNVDHGAQLIDINMGCPAKKVCNAWAGSALMRDEDLVARILSAVVRAVDVPVTLKIRTGWDCDHRNGPTIARIAQDCGIAALAVHGRTRDQHYTGTAEYATIAQIKAALQIPVIANGDIDSPQKAAQVLRDTGVDAVMIGRAAQGRPWIFGEVAHYLATGALLPPPSLAFVRDTLLGHLEALHAFYGQPQGVRIARKHLGWYAKDHPQSADFRAVVNRAETPEAQLALTRDYFDALIAGVPPPLHAAA.

FMN is bound by residues 16–18 (PMA) and glutamine 70. Cysteine 100 functions as the Proton donor in the catalytic mechanism. FMN-binding positions include lysine 139, 200-202 (NGD), and 224-225 (GR).

The protein belongs to the Dus family. DusB subfamily. Requires FMN as cofactor.

The catalysed reaction is a 5,6-dihydrouridine in tRNA + NAD(+) = a uridine in tRNA + NADH + H(+). It catalyses the reaction a 5,6-dihydrouridine in tRNA + NADP(+) = a uridine in tRNA + NADPH + H(+). Its function is as follows. Catalyzes the synthesis of 5,6-dihydrouridine (D), a modified base found in the D-loop of most tRNAs, via the reduction of the C5-C6 double bond in target uridines. The sequence is that of tRNA-dihydrouridine synthase B from Xanthomonas campestris pv. campestris (strain ATCC 33913 / DSM 3586 / NCPPB 528 / LMG 568 / P 25).